A 176-amino-acid polypeptide reads, in one-letter code: Peptide deformylase 1 (176 aa).

Positions 99 and 141 each coordinate Fe cation. Glutamate 142 is a catalytic residue. Histidine 145 is a binding site for Fe cation.

Belongs to the polypeptide deformylase family. It depends on Fe(2+) as a cofactor.

It catalyses the reaction N-terminal N-formyl-L-methionyl-[peptide] + H2O = N-terminal L-methionyl-[peptide] + formate. Its function is as follows. Removes the formyl group from the N-terminal Met of newly synthesized proteins. Requires at least a dipeptide for an efficient rate of reaction. N-terminal L-methionine is a prerequisite for activity but the enzyme has broad specificity at other positions. This chain is Peptide deformylase 1, found in Nitrosomonas europaea (strain ATCC 19718 / CIP 103999 / KCTC 2705 / NBRC 14298).